A 200-amino-acid polypeptide reads, in one-letter code: Ribonuclease HII (200 aa).

Positions 1–200 constitute an RNase H type-2 domain; the sequence is MRYGGVDEAG…EINKKLTDFI (200 aa). D7, E8, and D99 together coordinate a divalent metal cation.

This sequence belongs to the RNase HII family. It depends on Mn(2+) as a cofactor. The cofactor is Mg(2+).

It localises to the cytoplasm. It catalyses the reaction Endonucleolytic cleavage to 5'-phosphomonoester.. Endonuclease that specifically degrades the RNA of RNA-DNA hybrids. This chain is Ribonuclease HII, found in Nanoarchaeum equitans (strain Kin4-M).